Here is a 206-residue protein sequence, read N- to C-terminus: 2,3-bisphosphoglycerate-dependent phosphoglycerate mutase (206 aa).

Substrate-binding positions include 9–16 (RHGQSEWN), 22–23 (TG), Arg-61, 88–91 (ERDY), Lys-99, 115–116 (RR), and 159–160 (GN). His-10 acts as the Tele-phosphohistidine intermediate in catalysis. Glu-88 functions as the Proton donor/acceptor in the catalytic mechanism.

Belongs to the phosphoglycerate mutase family. BPG-dependent PGAM subfamily. In terms of assembly, homodimer.

It carries out the reaction (2R)-2-phosphoglycerate = (2R)-3-phosphoglycerate. The protein operates within carbohydrate degradation; glycolysis; pyruvate from D-glyceraldehyde 3-phosphate: step 3/5. Functionally, catalyzes the interconversion of 2-phosphoglycerate and 3-phosphoglycerate. This chain is 2,3-bisphosphoglycerate-dependent phosphoglycerate mutase, found in Bartonella quintana (strain Toulouse) (Rochalimaea quintana).